A 285-amino-acid polypeptide reads, in one-letter code: MSDDFLWFEGIAFPNMGFRSETLRKVRDEFVIKDEDVIILTYPKSGTNWLIEILCLIHSNGDPKWIQSVPIWERSPWVETEMGYKLLSEEEGPRLFSSHLPIQLFPKSFFSSKAKVIYLMRNPRDVFVSGYFFWNSVKFVKKPKSWQQYFEWFCQGNVIYGSWFDHIHGWMPMREKKNFLLLSYEELKQDTRRTVEKICQFLGKTLEPEELNLILKNSSFQSMKENKMSNFSLLSVDFVEEKAQLLRKGISGDWKNHLTVAQAEAFDKLFQEKMTDLPRELFPWE.

3'-phosphoadenylyl sulfate contacts are provided by Lys44, Ser45, Gly46, Thr47, Asn48, and Trp49. His99 (proton acceptor) is an active-site residue. 3'-phosphoadenylyl sulfate is bound by residues Arg121, Ser129, Tyr184, Ser218, Met223, Arg247, Lys248, and Gly249. The residue at position 251 (Ser251) is a Phosphoserine.

Belongs to the sulfotransferase 1 family. In terms of assembly, homodimer. As to expression, predominanly expressed in liver. Detected also in adrenal gland and in jejunum.

Its subcellular location is the cytoplasm. It localises to the cytosol. It catalyses the reaction an alcohol + 3'-phosphoadenylyl sulfate = an alkyl sulfate + adenosine 3',5'-bisphosphate + H(+). The enzyme catalyses 3beta-hydroxyandrost-5-en-17-one + 3'-phosphoadenylyl sulfate = dehydroepiandrosterone 3-sulfate + adenosine 3',5'-bisphosphate + H(+). The catalysed reaction is taurolithocholate + 3'-phosphoadenylyl sulfate = taurolithocholate 3-sulfate + adenosine 3',5'-bisphosphate + H(+). It carries out the reaction lithocholate + 3'-phosphoadenylyl sulfate = lithocholate sulfate + adenosine 3',5'-bisphosphate + H(+). It catalyses the reaction (24S)-hydroxycholesterol + 3'-phosphoadenylyl sulfate = (24S)-hydroxycholesterol 24-sulfate + adenosine 3',5'-bisphosphate + H(+). The enzyme catalyses (24S)-hydroxycholesterol + 3'-phosphoadenylyl sulfate = (24S)-hydroxycholesterol 3-sulfate + adenosine 3',5'-bisphosphate + H(+). The catalysed reaction is (24S)-hydroxycholesterol 24-sulfate + 3'-phosphoadenylyl sulfate = (24S)-hydroxycholesterol 3,24-disulfate + adenosine 3',5'-bisphosphate + H(+). It carries out the reaction pregnenolone + 3'-phosphoadenylyl sulfate = pregnenolone sulfate + adenosine 3',5'-bisphosphate + H(+). It catalyses the reaction androsterone + 3'-phosphoadenylyl sulfate = androsterone 3alpha-sulfate + adenosine 3',5'-bisphosphate + H(+). In terms of biological role, sulfotransferase that utilizes 3'-phospho-5'-adenylyl sulfate (PAPS) as sulfonate donor to catalyze the sulfonation of steroids and bile acids in the liver and adrenal glands. Mediates the sulfation of a wide range of steroids and sterols, including pregnenolone, androsterone, DHEA, bile acids, cholesterol and as well many xenobiotics that contain alcohol and phenol functional groups. Sulfonation increases the water solubility of most compounds, and therefore their renal excretion, but it can also result in bioactivation to form active metabolites. Plays an important role in maintening steroid and lipid homeostasis. Plays a key role in bile acid metabolism. In addition, catalyzes the metabolic activation of potent carcinogenic polycyclic arylmethanols. The sequence is that of Sulfotransferase 2A1 (SULT2A1) from Macaca fascicularis (Crab-eating macaque).